We begin with the raw amino-acid sequence, 89 residues long: UPF0250 protein Bphyt_0500 (89 aa).

It belongs to the UPF0250 family.

The chain is UPF0250 protein Bphyt_0500 from Paraburkholderia phytofirmans (strain DSM 17436 / LMG 22146 / PsJN) (Burkholderia phytofirmans).